We begin with the raw amino-acid sequence, 475 residues long: 3-hydroxyacyl-CoA dehydrogenase-like protein LAM1 (475 aa).

99 to 104 is a binding site for NAD(+); it reads GTRPFA. Lys-149 provides a ligand contact to CoA. NAD(+) is bound at residue Asn-245.

Belongs to the 3-hydroxyacyl-CoA dehydrogenase family.

It participates in mycotoxin biosynthesis. In terms of biological role, 3-hydroxyacyl-CoA dehydrogenase-like protein; part of the Tox1A locus, one of the 2 loci that mediate the biosynthesis of T-toxin, a family of linear polyketides 37 to 45 carbons in length, of which the major component is 41 carbons, and which leads to high virulence to maize. One of the PKSs (PKS1 or PKS2) could synthesize a precursor, used subsequently by the other PKS as starter unit, to add additional carbons. Variability in the length of the final carbon backbone C35-47 could be achieved by varying the number of condensation cycles, or use of different starter or extender units or might be due to decarboxylation of the penultimate product, catalyzed by DEC1. Additional proteins are required for the biosynthesis of T-toxin, including oxidoreductases RED1, RED2, RED3, LAM1 and OXI1, as well as esterase TOX9. In Cochliobolus heterostrophus (strain C4 / ATCC 48331 / race T) (Southern corn leaf blight fungus), this protein is 3-hydroxyacyl-CoA dehydrogenase-like protein LAM1.